Here is a 202-residue protein sequence, read N- to C-terminus: Adenylyl-sulfate kinase (202 aa).

31 to 38 (GLSASGKS) contributes to the ATP binding site. Ser105 functions as the Phosphoserine intermediate in the catalytic mechanism.

The protein belongs to the APS kinase family.

It catalyses the reaction adenosine 5'-phosphosulfate + ATP = 3'-phosphoadenylyl sulfate + ADP + H(+). Its pathway is sulfur metabolism; hydrogen sulfide biosynthesis; sulfite from sulfate: step 2/3. Its function is as follows. Catalyzes the synthesis of activated sulfate. This is Adenylyl-sulfate kinase (MET14) from Saccharomyces pastorianus (Lager yeast).